Reading from the N-terminus, the 205-residue chain is Small ribosomal subunit protein uS4 (205 aa).

The disordered stretch occupies residues 27–46 (LNKRDYAPGQHGQRRKGKPS). The region spanning 118–178 (HGHVLVNGKR…HVDHRLMKGT (61 aa)) is the S4 RNA-binding domain.

Belongs to the universal ribosomal protein uS4 family. Part of the 30S ribosomal subunit. Contacts protein S5. The interaction surface between S4 and S5 is involved in control of translational fidelity.

In terms of biological role, one of the primary rRNA binding proteins, it binds directly to 16S rRNA where it nucleates assembly of the body of the 30S subunit. With S5 and S12 plays an important role in translational accuracy. The polypeptide is Small ribosomal subunit protein uS4 (Granulibacter bethesdensis (strain ATCC BAA-1260 / CGDNIH1)).